The chain runs to 593 residues: DNA topoisomerase I, mitochondrial (593 aa).

The transit peptide at 1-43 (MLLLWLRALCRRFQHVPRRVPSRQVSRGSKASRAGWGETSKSS) directs the protein to the mitochondrion. Interaction with DNA stretches follow at residues 254-255 (KY), 317-322 (RTGNEK), and 414-416 (TAK). One can recognise a Topo IB-type catalytic domain in the interval 261 to 593 (SSKPKGEMDW…FNQAGEDFEF (333 aa)). The O-(3'-phospho-DNA)-tyrosine intermediate role is filled by tyrosine 551.

Belongs to the type IB topoisomerase family. The cofactor is Ca(2+). Mg(2+) serves as cofactor.

The protein resides in the mitochondrion. It carries out the reaction ATP-independent breakage of single-stranded DNA, followed by passage and rejoining.. In terms of biological role, releases the supercoiling and torsional tension of DNA introduced during duplication of mitochondrial DNA by transiently cleaving and rejoining one strand of the DNA duplex. Introduces a single-strand break via transesterification at a target site in duplex DNA. The scissile phosphodiester is attacked by the catalytic tyrosine of the enzyme, resulting in the formation of a DNA-(3'-phosphotyrosyl)-enzyme intermediate and the expulsion of a 5'-OH DNA strand. The free DNA strand then rotates around the intact phosphodiester bond on the opposing strand, thus removing DNA supercoils. Finally, in the religation step, the DNA 5'-OH attacks the covalent intermediate to expel the active-site tyrosine and restore the DNA phosphodiester backbone. The polypeptide is DNA topoisomerase I, mitochondrial (Top1mt) (Rattus norvegicus (Rat)).